We begin with the raw amino-acid sequence, 358 residues long: Ribosomal RNA large subunit methyltransferase M (358 aa).

S-adenosyl-L-methionine is bound by residues Ser-183, 216–219, Asp-235, Asp-255, and Asp-271; that span reads APGG. Catalysis depends on Lys-300, which acts as the Proton acceptor.

This sequence belongs to the class I-like SAM-binding methyltransferase superfamily. RNA methyltransferase RlmE family. RlmM subfamily. As to quaternary structure, monomer.

It is found in the cytoplasm. It carries out the reaction cytidine(2498) in 23S rRNA + S-adenosyl-L-methionine = 2'-O-methylcytidine(2498) in 23S rRNA + S-adenosyl-L-homocysteine + H(+). In terms of biological role, catalyzes the 2'-O-methylation at nucleotide C2498 in 23S rRNA. In Pseudomonas fluorescens (strain SBW25), this protein is Ribosomal RNA large subunit methyltransferase M.